Consider the following 55-residue polypeptide: Large ribosomal subunit protein bL33 (55 aa).

The protein belongs to the bacterial ribosomal protein bL33 family.

This is Large ribosomal subunit protein bL33 from Rhizorhabdus wittichii (strain DSM 6014 / CCUG 31198 / JCM 15750 / NBRC 105917 / EY 4224 / RW1) (Sphingomonas wittichii).